Reading from the N-terminus, the 238-residue chain is Small ribosomal subunit protein uS3 (238 aa).

The 71-residue stretch at 39 to 109 (IRTFINQQLA…TIKVNVVEVN (71 aa)) folds into the KH type-2 domain. A disordered region spans residues 215 to 238 (EAVPREATRRSPQRRLPQFENRSN).

It belongs to the universal ribosomal protein uS3 family. Part of the 30S ribosomal subunit. Forms a tight complex with proteins S10 and S14.

In terms of biological role, binds the lower part of the 30S subunit head. Binds mRNA in the 70S ribosome, positioning it for translation. This Thermosynechococcus vestitus (strain NIES-2133 / IAM M-273 / BP-1) protein is Small ribosomal subunit protein uS3.